Reading from the N-terminus, the 338-residue chain is MGLKINRPRRGSMGVYPRKRAADIVPRVRTWPEVNLGKPALLGFAAYKAGMLHAVVVDDRPTSPLYGKEVVKAVTVLDAPPLYVWGFRLYTLDPTNGYKRAVAEVWASELPKFLHRVLTLPEKLDVDKQLKKVEEFRDVAVDVRALVATQPHLSGIGKKTPELLEIPIGGVPSVDERINFAISLLGKTVSPKDVFTPGQLVDVIAVTKGKGYQGVIKRFGVTILPRWHKHRKGHRRTGTIGPQAPAVMFTQPRPGQMGFHQRTEYNKRLLKIGENGAEITPKSGFPHYGVVKGPYILIQGSVPGARKRLVVLRHPVRPPRKAPPAAEPQVVWVSSQTL.

Positions 230–258 (HRKGHRRTGTIGPQAPAVMFTQPRPGQMG) are disordered.

It belongs to the universal ribosomal protein uL3 family. As to quaternary structure, part of the 50S ribosomal subunit. Forms a cluster with proteins L14 and L24e.

Functionally, one of the primary rRNA binding proteins, it binds directly near the 3'-end of the 23S rRNA, where it nucleates assembly of the 50S subunit. This chain is Large ribosomal subunit protein uL3, found in Pyrobaculum aerophilum (strain ATCC 51768 / DSM 7523 / JCM 9630 / CIP 104966 / NBRC 100827 / IM2).